Here is a 234-residue protein sequence, read N- to C-terminus: Phosphoribosylaminoimidazole-succinocarboxamide synthase (234 aa).

It belongs to the SAICAR synthetase family.

The enzyme catalyses 5-amino-1-(5-phospho-D-ribosyl)imidazole-4-carboxylate + L-aspartate + ATP = (2S)-2-[5-amino-1-(5-phospho-beta-D-ribosyl)imidazole-4-carboxamido]succinate + ADP + phosphate + 2 H(+). Its pathway is purine metabolism; IMP biosynthesis via de novo pathway; 5-amino-1-(5-phospho-D-ribosyl)imidazole-4-carboxamide from 5-amino-1-(5-phospho-D-ribosyl)imidazole-4-carboxylate: step 1/2. The sequence is that of Phosphoribosylaminoimidazole-succinocarboxamide synthase from Clostridium botulinum (strain Langeland / NCTC 10281 / Type F).